Reading from the N-terminus, the 89-residue chain is UPF0147 protein Msed_2034 (89 aa).

It belongs to the UPF0147 family.

The polypeptide is UPF0147 protein Msed_2034 (Metallosphaera sedula (strain ATCC 51363 / DSM 5348 / JCM 9185 / NBRC 15509 / TH2)).